Here is a 203-residue protein sequence, read N- to C-terminus: Superoxide dismutase [Mn] (203 aa).

Mn(2+) is bound by residues H27, H81, D164, and H168.

Belongs to the iron/manganese superoxide dismutase family. Mn(2+) serves as cofactor.

It catalyses the reaction 2 superoxide + 2 H(+) = H2O2 + O2. Functionally, destroys superoxide anion radicals which are normally produced within the cells and which are toxic to biological systems. This is Superoxide dismutase [Mn] (sodA) from Xanthomonas campestris pv. campestris (strain 8004).